The chain runs to 522 residues: Target of rapamycin complex 2 subunit MAPKAP1 (522 aa).

An N-acetylalanine modification is found at A2. An interaction with MAP3K2 region spans residues 2–184 (AFLDNPTIIL…KKIDVYLPLH (183 aa)). The segment at 2-267 (AFLDNPTIIL…GFSTLALVEK (266 aa)) is interaction with NBN. Residue T86 is modified to Phosphothreonine. Phosphoserine occurs at positions 128, 186, 315, and 356. The region spanning 139–267 (QSILSVRLEQ…GFSTLALVEK (129 aa)) is the CRIM domain. The SIN1-type RBD stretch occupies residues 279-353 (LFVRINAAHG…QSAWEFCQVR (75 aa)). The region spanning 382 to 487 (HYKSFKVSMI…IVLKVNYILE (106 aa)) is the SIN1-type PH domain. R393 provides a ligand contact to a 1,2-diacyl-sn-glycero-3-phospho-(1D-myo-inositol-3,4,5-trisphosphate). T398 bears the Phosphothreonine mark. Positions 428 and 464 each coordinate a 1,2-diacyl-sn-glycero-3-phospho-(1D-myo-inositol-3,4,5-trisphosphate). The interval 468–522 (FESDAATVNEIVLKVNYILESRASTARADYFAQKQRKLNRRTSFSFQKEKKSGQQ) is interaction with ATF2. At S510 the chain carries Phosphoserine.

It belongs to the SIN1 family. Component of the mechanistic target of rapamycin complex 2 (mTORC2), consisting in two heterotretramers composed of MTOR, MLST8, RICTOR and MAPKAP1/SIN1. The mTORC2 core complex associates with PRR5/PROTOR1 and/or PRR5L/PROTOR2. Contrary to mTORC1, mTORC2 does not bind to and is not sensitive to FKBP12-rapamycin. Interacts with MAP3K2. Interacts with ATF2. Interacts with MAPK8. Interacts with GTP-bound HRAS and KRAS; inhibiting their activity. Interacts with IFNAR2. In terms of processing, phosphorylation at Ser-128 by PKC promotes relocalization to the perinuclear region, where the mTORC2 complex specifically mediates phosphorylation of SGK1. Phosphorylated at Thr-86 by AKT1 or RPS6KB1 in the presence of growth factors; the effect of this phosphorylation is however unclear. According to two studies, phosphorylation at Thr-86 by AKT1 is part of a positive feedback loop that increases mTORC2 activation. According to another study, phosphorylation at Thr-86 and Thr-398 by RPS6KB1 promotes dissociation from the mTORC2 complex, leading to inhibit mTORC2 signaling.

It is found in the cell membrane. It localises to the endoplasmic reticulum membrane. Its subcellular location is the early endosome membrane. The protein resides in the late endosome membrane. The protein localises to the lysosome membrane. It is found in the golgi apparatus membrane. It localises to the mitochondrion outer membrane. Its subcellular location is the cytoplasm. The protein resides in the perinuclear region. The protein localises to the nucleus. Phosphatidylinositol 3,4,5-trisphosphate (PI(3,4,5)P3) promotes MTOR activation by relieving MAPKAP1/SIN1-mediated inhibition of MTOR that takes place in absence of PI(3,4,5)P3. Functionally, component of the mechanistic target of rapamycin complex 2 (mTORC2), which transduces signals from growth factors to pathways involved in proliferation, cytoskeletal organization, lipogenesis and anabolic output. In response to growth factors, mTORC2 phosphorylates and activates AGC protein kinase family members, including AKT (AKT1, AKT2 and AKT3), PKC (PRKCA, PRKCB and PRKCE) and SGK1. In contrast to mTORC1, mTORC2 is nutrient-insensitive. Within the mTORC2 complex, MAPKAP1/SIN1 acts as a substrate adapter which recognizes and binds AGC protein kinase family members for phosphorylation by MTOR. mTORC2 plays a critical role in AKT1 activation by mediating phosphorylation of different sites depending on the context, such as 'Thr-450', 'Ser-473', 'Ser-477' or 'Thr-479', facilitating the phosphorylation of the activation loop of AKT1 on 'Thr-308' by PDPK1/PDK1 which is a prerequisite for full activation. mTORC2 catalyzes the phosphorylation of SGK1 at 'Ser-422' and of PRKCA on 'Ser-657'. The mTORC2 complex also phosphorylates various proteins involved in insulin signaling, such as FBXW8 and IGF2BP1. mTORC2 acts upstream of Rho GTPases to regulate the actin cytoskeleton, probably by activating one or more Rho-type guanine nucleotide exchange factors. mTORC2 promotes the serum-induced formation of stress-fibers or F-actin. MAPKAP1 inhibits MAP3K2 by preventing its dimerization and autophosphorylation. Inhibits HRAS and KRAS independently of mTORC2 complex. Enhances osmotic stress-induced phosphorylation of ATF2 and ATF2-mediated transcription. Involved in ciliogenesis, regulates cilia length through its interaction with CCDC28B independently of mTORC2 complex. This is Target of rapamycin complex 2 subunit MAPKAP1 (MAPKAP1) from Pongo abelii (Sumatran orangutan).